A 445-amino-acid polypeptide reads, in one-letter code: 6-phosphogluconate dehydrogenase, decarboxylating (445 aa).

Residues 1 to 4 (AVMG), 22 to 24 (NRS), 63 to 65 (VQA), and N91 each bind NADP(+). Substrate-binding positions include N91 and 117-119 (SGG). K172 functions as the Proton acceptor in the catalytic mechanism. 175–176 (HN) provides a ligand contact to substrate. The active-site Proton donor is E179. Residues Y180, K249, R276, R434, and H440 each coordinate substrate.

It belongs to the 6-phosphogluconate dehydrogenase family. Homodimer.

It carries out the reaction 6-phospho-D-gluconate + NADP(+) = D-ribulose 5-phosphate + CO2 + NADPH. Its pathway is carbohydrate degradation; pentose phosphate pathway; D-ribulose 5-phosphate from D-glucose 6-phosphate (oxidative stage): step 3/3. Catalyzes the oxidative decarboxylation of 6-phosphogluconate to ribulose 5-phosphate and CO(2), with concomitant reduction of NADP to NADPH. The sequence is that of 6-phosphogluconate dehydrogenase, decarboxylating (gnd) from Pseudescherichia vulneris (Escherichia vulneris).